The sequence spans 293 residues: Magnetosome protein MamB (293 aa).

At 1-12 (MTTAACRKCRDE) the chain is on the cytoplasmic side. The transmembrane domain (TMD) stretch occupies residues 1–214 (MTTAACRKCR…GLMDTSVEND (214 aa)). Residues 13–33 (VIWWAFFINIGQTTYKGVLGV) traverse the membrane as a helical segment. At 34–78 (LSGSAALVADAMHSGADVVATLVTMFSVKVSDKKADEKYPFGYGN) the chain is on the lumenal side. Residues 79-99 (IQFIASSIVGLILFFGALYLM) form a helical membrane-spanning segment. The Cytoplasmic portion of the chain corresponds to 100-105 (YESTMQ). A helical membrane pass occupies residues 106–126 (IIAGNTSSPSPFAVLGAIVSI). The Lumenal portion of the chain corresponds to 127 to 158 (ATNELMFRYQSCVGRQNNSPAIIANAWDNRSD). The chain crosses the membrane as a helical span at residues 159–179 (ALSSVAVLIGIVAAVVGFPIA). At 180 to 293 (DRLAAIGVGI…VGVTPVRIAA (114 aa)) the chain is on the cytoplasmic side. A C-terminal domain (CTD) region spans residues 215-293 (VLVDAYNIAK…VGVTPVRIAA (79 aa)). Residues His-245, Asp-247, and His-283 each contribute to the Zn(2+) site.

This sequence belongs to the cation diffusion facilitator (CDF) transporter (TC 2.A.4) family. The isolated C-terminal domain (approximately 213-293) forms homodimers. Forms heterodimers with MamM.

It localises to the magnetosome membrane. In terms of biological role, plays a dual, essential role in magnetosome formation; required for magnetosome vesicle formation as well as biomineralization. Probably binds and transports iron. Requires heterodimerization with MamM for stability. The protein is Magnetosome protein MamB (mamB) of Magnetospira sp. (strain QH-2) (Marine magnetic spirillum (strain QH-2)).